We begin with the raw amino-acid sequence, 608 residues long: Glutamine--fructose-6-phosphate aminotransferase [isomerizing] (608 aa).

Cys-2 acts as the Nucleophile; for GATase activity in catalysis. The region spanning 2 to 217 is the Glutamine amidotransferase type-2 domain; that stretch reads CGIVGIVGNQ…DGDWAVIGKT (216 aa). SIS domains lie at 281–422 and 456–598; these read ISDA…ARGT and LSRE…VDQP. Lys-603 functions as the For Fru-6P isomerization activity in the catalytic mechanism.

Homodimer.

It localises to the cytoplasm. It catalyses the reaction D-fructose 6-phosphate + L-glutamine = D-glucosamine 6-phosphate + L-glutamate. Catalyzes the first step in hexosamine metabolism, converting fructose-6P into glucosamine-6P using glutamine as a nitrogen source. This chain is Glutamine--fructose-6-phosphate aminotransferase [isomerizing], found in Rhizobium meliloti (strain 1021) (Ensifer meliloti).